The primary structure comprises 654 residues: MASINVKFPDGAEKQFDAGVTTEAIAKSISPSLAKRSVAGKFNDQIVDYRQPLTTDGSIEIIAADSEDGLNVLRQTAAQVLANAVKQLFPNIHFGSGEGNANGFFFDTDNPDEDGKQVSEDDLEAISDKMAAIIKQDLPIEREVLSKADALALVGDNPYQQDLVNERAAANNDQVVVYKQGDFVDLSDGAQLASTGKVKVFKLLSVAGAYWQGKSSNPMLQRIYGTAFLKQKDLDADLKRRQEARERDHRVIGNELDLFFVDPKVGNGLPYWMPNGATIRRQIERYIIDKEVANGYQHVYTPVLANLDVYKQSGHWDHYREDMFPPMDMGDGEQLELRPMNCPSHIQIYNHHIRSYRELPLRIAELGMMHRYEKSGALTGLSRVREMTLNDGHTFVALDQIEEEFKKILSLMVEVYEDFDISDYRFRLSYRDPENKEKYFDDDAMWERSQKMLKSAMDDMGLDYFEAEGEAAFYGPKLDVQTKTALGGEETLSTIQLDFLLPERFDLKYVGADGEEHRPVMIHRGLVSTMERFVAYLTEIYKGAFPTWLAPKQVTIIPVNNGAHGAYAETVRRRLAAEGVRVSIDDRNEKMGYKIRESQTKKVPYLLVVGDQEVANGSVSVRKYGEERTESEAVDMFIGAITQEIKHYSRGASK.

The TGS domain maps to 1-63; sequence MASINVKFPD…TTDGSIEIIA (63 aa). Residues 248 to 546 are catalytic; sequence DHRVIGNELD…LTEIYKGAFP (299 aa). 3 residues coordinate Zn(2+): C342, H393, and H523.

It belongs to the class-II aminoacyl-tRNA synthetase family. Homodimer. Zn(2+) serves as cofactor.

It is found in the cytoplasm. The catalysed reaction is tRNA(Thr) + L-threonine + ATP = L-threonyl-tRNA(Thr) + AMP + diphosphate + H(+). In terms of biological role, catalyzes the attachment of threonine to tRNA(Thr) in a two-step reaction: L-threonine is first activated by ATP to form Thr-AMP and then transferred to the acceptor end of tRNA(Thr). Also edits incorrectly charged L-seryl-tRNA(Thr). This Lactiplantibacillus plantarum (strain ATCC BAA-793 / NCIMB 8826 / WCFS1) (Lactobacillus plantarum) protein is Threonine--tRNA ligase.